Here is a 319-residue protein sequence, read N- to C-terminus: Pyrroline-5-carboxylate reductase 1, mitochondrial (319 aa).

At S2 the chain carries N-acetylserine. Residues 6–11 and S34 each bind NADP(+); that span reads IGAGQL. A8, Q10, L11, S34, D36, N56, V70, K71, and A97 together coordinate NADPH. NADP(+) contacts are provided by residues N56, 69-72, and 95-97; these read AVKP and CAA. E164 is an L-proline binding site. N230 contributes to the NADPH binding site. A237 and T238 together coordinate L-proline. Phosphoserine occurs at positions 278 and 301. Residues 294–319 form a disordered region; the sequence is SPAGTALSPSGHTKLLPRSLAPAGKD.

This sequence belongs to the pyrroline-5-carboxylate reductase family. In terms of assembly, homodecamer; composed of 5 homodimers. Interacts with LTO1.

Its subcellular location is the mitochondrion. The enzyme catalyses L-proline + NADP(+) = (S)-1-pyrroline-5-carboxylate + NADPH + 2 H(+). It catalyses the reaction L-proline + NAD(+) = (S)-1-pyrroline-5-carboxylate + NADH + 2 H(+). Its pathway is amino-acid biosynthesis; L-proline biosynthesis; L-proline from L-glutamate 5-semialdehyde: step 1/1. Subject to competitive inhibition by the reaction product proline. Subject to competitive inhibition by stearoyl coenzyme A. Oxidoreductase that catalyzes the last step in proline biosynthesis, which corresponds to the reduction of pyrroline-5-carboxylate to L-proline using NAD(P)H. At physiologic concentrations, has higher specific activity in the presence of NADH. Involved in the cellular response to oxidative stress. The chain is Pyrroline-5-carboxylate reductase 1, mitochondrial from Homo sapiens (Human).